Reading from the N-terminus, the 716-residue chain is DNA ligase (716 aa).

NAD(+) is bound by residues 49-53, 98-99, and Glu-131; these read DAEYD and SL. The active-site N6-AMP-lysine intermediate is Lys-133. NAD(+)-binding residues include Arg-154, Glu-191, Lys-308, and Lys-332. Positions 437, 439, 461, and 467 each coordinate Zn(2+). Residues 638-716 form the BRCT domain; that stretch reads KRHSPIATKT…EDEWLQLIAE (79 aa).

The protein belongs to the NAD-dependent DNA ligase family. LigA subfamily. Mg(2+) is required as a cofactor. Requires Mn(2+) as cofactor.

It catalyses the reaction NAD(+) + (deoxyribonucleotide)n-3'-hydroxyl + 5'-phospho-(deoxyribonucleotide)m = (deoxyribonucleotide)n+m + AMP + beta-nicotinamide D-nucleotide.. Functionally, DNA ligase that catalyzes the formation of phosphodiester linkages between 5'-phosphoryl and 3'-hydroxyl groups in double-stranded DNA using NAD as a coenzyme and as the energy source for the reaction. It is essential for DNA replication and repair of damaged DNA. In Bradyrhizobium sp. (strain BTAi1 / ATCC BAA-1182), this protein is DNA ligase.